Here is a 202-residue protein sequence, read N- to C-terminus: Indolepyruvate oxidoreductase subunit IorB (202 aa).

In terms of assembly, heterodimer of the IorA and IorB subunits.

The catalysed reaction is indole-3-pyruvate + 2 oxidized [2Fe-2S]-[ferredoxin] + CoA = (indol-3-yl)acetyl-CoA + 2 reduced [2Fe-2S]-[ferredoxin] + CO2 + H(+). Functionally, catalyzes the ferredoxin-dependent oxidative decarboxylation of arylpyruvates. This is Indolepyruvate oxidoreductase subunit IorB (iorB) from Pyrococcus horikoshii (strain ATCC 700860 / DSM 12428 / JCM 9974 / NBRC 100139 / OT-3).